A 1185-amino-acid polypeptide reads, in one-letter code: MISFISGRWWRWKFQNTLAVFLLLICLSTSVAQSCQSSTSCNVVLTDSQGSFTSPCYPNDYPPSQSCNWTIQAPAGFIVQITFLDFELEEAQGCIYDRVVVKTGTSDAKFCGLTANGLTLNSTGNVMEVFFNSDFSVQKKGFHISYKQVAVTLRNQKVTMPKSSKTILRVSNSISIPVLTAFTVCFEIARTAQKATETIFTLSDAAGTSILAFEKTSNGMELFIGASYCSVDNLLTSSDITATMKPLCLTWTKSSGLIGVYFGGHYFSSICSASQIYTLQSGGLLQIAGKGSSSVSVDDQNLDGFIYNFRLWDHAMLSSELSALTCDTVGNVVDWDHSYWTIPGSSTQTDSTLSCSTAITTLSPGTAGCASGLGCPATLTVTITSIATTNIIPTNATTHEDIFYRSTLVVTDEQTPDRDATAIISQWLNQTFQNWMYRVYVDGISLQLITVLSRITTTRQTYLALLVYKNTTDVNLAEVEIESMLRSAPAIGNGLTLDSVTVNLMENCQADEFPVHYRWPESRPTVTQYVPCFPYKDRNASRTCMINRDNYTSFWALPDRGNCTNITSITVSQENAMDVAVQLADISNNGLSKEELTQVVTKVMELVNIAKINATLASTVVTIISNVMVSSEDAQKDASETALKAVDELVQKIEFDGPSLTISSKNLVVGVSALDTTNFNGSTLSAFIATNTTDPQIDFDSEAHNALAVVTLPPTLLQNLSLSQIEKVSRINFMFFGRTGLFQDHQNNGLTLNSYVVASSVGNFTIKNLQDPVRIEIAHLEYQKDPNPQCVFWDFNLQNYSGGCNSDGCKVGSDSNSNRTVCLCNHLTHFGILMDVSRAAELIDEKNNRVLTFITYIGCGISAIFSAATLLTYIAFEKLRRDYPSKILMNLSTSLLFLNMVFLLDGWLASYEIKELCVTVAVFLHFFLLTSFTWMGLESIHMYIALVKVFNTYIRRYILKFCIVGWGVPAAIVGIVLAVSKDSYGKNYYGKGKDGQGTSEFCWILNPVVFYVTCVAYFSIIFLMNVAMFIVVMIQICGRNGKRSNRTLREDILRNLRSVVSLTFLLGMTWGFAFFAWGPVSLAFMYLFTIFNSLQGLFIFVFHCALKENVQKQWRRYLCCGKLRLADNSDWSKTATNNTKKVSSDNLGKSLSSSSFGSTTANWTSKAKATLNPFARHSNADSTLQ.

An N-terminal signal peptide occupies residues 1 to 32 (MISFISGRWWRWKFQNTLAVFLLLICLSTSVA). Residues 33-849 (QSCQSSTSCN…AELIDEKNNR (817 aa)) lie on the Extracellular side of the membrane. Cysteine 41 and cysteine 67 form a disulfide bridge. The CUB domain occupies 41-149 (CNVVLTDSQG…KGFHISYKQV (109 aa)). Residues 41 to 354 (CNVVLTDSQG…SSTQTDSTLS (314 aa)) are mediates interaction with type IV collagen. Residues 41–839 (CNVVLTDSQG…FGILMDVSRA (799 aa)) are inhibits receptor signaling in absence of type IV collagen. A glycan (N-linked (GlcNAc...) asparagine) is linked at asparagine 68. 2 residues coordinate Ca(2+): glutamate 89 and aspartate 97. Residues cysteine 94 and cysteine 111 are joined by a disulfide bond. N-linked (GlcNAc...) asparagine glycosylation is present at asparagine 121. Positions 134, 136, and 137 each coordinate Ca(2+). The region spanning 154–355 (RNQKVTMPKS…STQTDSTLSC (202 aa)) is the Pentraxin (PTX) domain. 3 disulfide bridges follow: cysteine 185–cysteine 248, cysteine 229–cysteine 271, and cysteine 369–cysteine 375. N-linked (GlcNAc...) asparagine glycosylation is found at asparagine 395, asparagine 429, asparagine 470, asparagine 539, asparagine 550, asparagine 562, asparagine 565, asparagine 613, asparagine 680, asparagine 691, asparagine 719, asparagine 763, asparagine 799, and asparagine 818. 2 disulfides stabilise this stretch: cysteine 508–cysteine 544 and cysteine 532–cysteine 563. Positions 658-840 (PSLTISSKNL…GILMDVSRAA (183 aa)) constitute a GAIN-B domain. 2 disulfides stabilise this stretch: cysteine 790/cysteine 822 and cysteine 809/cysteine 824. A GPS region spans residues 790-840 (CVFWDFNLQNYSGGCNSDGCKVGSDSNSNRTVCLCNHLTHFGILMDVSRAA). The segment at 829–837 (HFGILMDVS) is stachel. The chain crosses the membrane as a helical span at residues 850-870 (VLTFITYIGCGISAIFSAATL). The Cytoplasmic portion of the chain corresponds to 871–886 (LTYIAFEKLRRDYPSK). A helical transmembrane segment spans residues 887–907 (ILMNLSTSLLFLNMVFLLDGW). At 908–915 (LASYEIKE) the chain is on the extracellular side. The helical transmembrane segment at 916 to 936 (LCVTVAVFLHFFLLTSFTWMG) threads the bilayer. Over 937-957 (LESIHMYIALVKVFNTYIRRY) the chain is Cytoplasmic. The chain crosses the membrane as a helical span at residues 958 to 978 (ILKFCIVGWGVPAAIVGIVLA). At 979–1013 (VSKDSYGKNYYGKGKDGQGTSEFCWILNPVVFYVT) the chain is on the extracellular side. The helical transmembrane segment at 1014–1034 (CVAYFSIIFLMNVAMFIVVMI) threads the bilayer. Topologically, residues 1035 to 1057 (QICGRNGKRSNRTLREDILRNLR) are cytoplasmic. The chain crosses the membrane as a helical span at residues 1058–1080 (SVVSLTFLLGMTWGFAFFAWGPV). Topologically, residues 1081–1083 (SLA) are extracellular. The helical transmembrane segment at 1084–1106 (FMYLFTIFNSLQGLFIFVFHCAL) threads the bilayer. Residue asparagine 1092 coordinates 17alpha-hydroxyprogesterone. Residues 1107 to 1185 (KENVQKQWRR…RHSNADSTLQ (79 aa)) are Cytoplasmic-facing. A disordered region spans residues 1138–1160 (NTKKVSSDNLGKSLSSSSFGSTT). A compositionally biased stretch (low complexity) spans 1144–1158 (SDNLGKSLSSSSFGS).

It belongs to the G-protein coupled receptor 2 family. Adhesion G-protein coupled receptor (ADGR) subfamily. Autoproteolytically processed at the GPS region of the GAIN-B domain; this cleavage modulates receptor activity. In terms of tissue distribution, expressed in Schwann cells of the posterior lateral line nerve and in brain.

It localises to the cell membrane. Its activity is regulated as follows. Forms a heterodimer of 2 chains generated by proteolytic processing that remain associated through non-covalent interactions mediated by the GAIN-B domain. In the inactivated receptor, the Stachel sequence (also named stalk) is embedded in the GAIN-B domain, where it adopts a beta-strand conformation. On activation, the Stachel moves into the 7 transmembrane region and adopts a twisted hook-shaped configuration that forms contacts within the receptor, leading to coupling of a G-alpha protein, which activates signaling. The cleaved GAIN-B and N-terminal domains can then dissociate from the rest of the receptor. Its function is as follows. Adhesion G-protein coupled receptor (aGPCR) for steroid hormones, such as progesterone and 17alpha-hydroxyprogesterone (17OHP). Ligand binding causes a conformation change that triggers signaling via guanine nucleotide-binding proteins (G proteins) and modulates the activity of downstream effectors, such as adenylate cyclase. Adgrg6 is coupled to G(i) G alpha proteins and mediates inhibition of adenylate cyclase. Also able to couple to G(q) G proteins. Involved in myelination of the peripheral nervous system: required for differentiation of promyelinating Schwann cells and for normal myelination of axons. G-protein coupled receptor activity can also be activated by type IV collagen, a major constituent of the basement membrane. Also plays a role inner ear development. The protein is Adhesion G-protein coupled receptor G6 (adgrg6) of Danio rerio (Zebrafish).